A 525-amino-acid chain; its full sequence is MEEKSKSRGWCGWFIAIIVLASVILAVVYTVKLRTKKSGDDDGGGPVPGPPGAIDKKYADALKLALQFFDIQKSGKLENNKIPWRGDSGLKDGSEDNLDLSKGLYDAGDHIKFGFPMAFTATVLSWSILEYGDQMNAVNQLDPAKDSLRWITDYLIKAHPSDNVLYIQVGDPKVDHPCWERPEDMKEKRPLTKIDVDTPGTEVAAETAAAMASASLVFKDSDPTYSATLLKHAKQLFNFADTKRGSYSVNIPEVQKFYNSTGYGDELLWAASWLYHATEDKTYLDYVSNHGKEFASFGNPTWFSWDNKLAGTQVLLSRLLFFKKDLSGSKGLGNYRNTAKAVMCGLLPKSPTSTASRTNGGLIWVSEWNSMQQSVSSAFLASLFSDYMLTSRIHKISCDGKIFKATELRDFAKSQADYMLGKNPLGTSFVVGYGDKYPQFVHHRGASIPADATTGCLDGFKWFNSTKPNPNIAYGALVGGPFFNETFTDSRENPMQNEPTTYNNALLVGLLSSLVTTSSTLQSLK.

An N-terminal signal peptide occupies residues 1–26 (MEEKSKSRGWCGWFIAIIVLASVILA). Residue aspartate 109 is the Nucleophile of the active site. Asparagine 259 is a glycosylation site (N-linked (GlcNAc...) asparagine). Histidine 442 is an active-site residue. 2 N-linked (GlcNAc...) asparagine glycosylation sites follow: asparagine 464 and asparagine 484. Active-site residues include aspartate 489 and glutamate 498.

Belongs to the glycosyl hydrolase 9 (cellulase E) family.

The protein localises to the secreted. The enzyme catalyses Endohydrolysis of (1-&gt;4)-beta-D-glucosidic linkages in cellulose, lichenin and cereal beta-D-glucans.. This chain is Endoglucanase 10, found in Arabidopsis thaliana (Mouse-ear cress).